The chain runs to 154 residues: Putative ankyrin repeat protein RBE_1220 (154 aa).

2 ANK repeats span residues 78-108 (EKVN…NVDQ) and 113-142 (NSRT…ILIL).

The sequence is that of Putative ankyrin repeat protein RBE_1220 from Rickettsia bellii (strain RML369-C).